The following is a 181-amino-acid chain: Thioredoxin-like protein CITRX1, chloroplastic (181 aa).

The interval 1–20 (MQAATLSFHPSAPPPQTSAC) is disordered. The N-terminal 70 residues, 1–70 (MQAATLSFHP…PAVATGKYVR (70 aa)), are a transit peptide targeting the chloroplast. The Thioredoxin domain occupies 71–181 (EDYLVKKVSA…MMRDIINNDL (111 aa)). Active-site nucleophile residues include cysteine 104 and cysteine 107. A disulfide bridge links cysteine 104 with cysteine 107.

It belongs to the thioredoxin family. Plant CITRX-type subfamily.

It is found in the plastid. Its subcellular location is the chloroplast. Probable thiol-disulfide oxidoreductase that may play a role in proper chloroplast development. The protein is Thioredoxin-like protein CITRX1, chloroplastic of Nicotiana benthamiana.